Here is a 357-residue protein sequence, read N- to C-terminus: UPF0283 membrane protein BMEI0952 (357 aa).

The disordered stretch occupies residues 1 to 36 (MSDKTPRKPTAFRLEQPARVSAASEQEEPRRPRAVK). The segment covering 27–36 (EEPRRPRAVK) has biased composition (basic and acidic residues). The next 2 helical transmembrane spans lie at 78–98 (ILFG…TEDL) and 109–129 (LGWT…AIIL).

Belongs to the UPF0283 family.

It is found in the cell inner membrane. This is UPF0283 membrane protein BMEI0952 from Brucella melitensis biotype 1 (strain ATCC 23456 / CCUG 17765 / NCTC 10094 / 16M).